The primary structure comprises 123 residues: Neuropeptide-like peptides nlp-40 (123 aa).

The N-terminal stretch at 1-17 (MKLVILLSFVATVAVFA) is a signal peptide. Propeptides lie at residues 30 to 31 (RA), 66 to 67 (KR), and 75 to 76 (KR).

As to expression, expressed in intestinal cells.

It localises to the secreted. Its subcellular location is the cytoplasmic vesicle. Functionally, neuropeptide ligand for the G-protein coupled receptor aex-2. Activates and regulates the rhythmic calcium influx in DVB GABergic neurons during the defecation motor program, which is a coordinated series of three muscle contractions that occurs every 45 seconds. This Caenorhabditis elegans protein is Neuropeptide-like peptides nlp-40.